Reading from the N-terminus, the 653-residue chain is Thioredoxin domain-containing protein 3 homolog (653 aa).

Positions 9-114 constitute a Thioredoxin domain; it reads LQETLNTQEA…QETIQETLKN (106 aa). A disulfide bond links C38 and C41. The interval 155–299 is NDK 1; the sequence is KQITVALIKP…FFFPDFKPPT (145 aa). Positions 300–323 are disordered; it reads YRSAKSAASRASGRRSKTPSQKPR. Residues 301–310 are compositionally biased toward low complexity; the sequence is RSAKSAASRA. NDK stretches follow at residues 324–459 and 459–597; these read LQRT…IFHV and VEQT…QFDW. The disordered stretch occupies residues 603 to 653; sequence QAEEGEVNETSGEQPTDEQSGETEKTEEDGEHEGAQSDQQQAVSEAMEKEE. The span at 617–633 shows a compositional bias: acidic residues; it reads PTDEQSGETEKTEEDGE.

This sequence in the C-terminal section; belongs to the NDK family. Testis-specific.

In terms of biological role, may be required during the final stages of sperm tail maturation. May act by reducing disulfide bonds within the sperm components. This chain is Thioredoxin domain-containing protein 3 homolog (CiIC3), found in Ciona intestinalis (Transparent sea squirt).